Consider the following 341-residue polypeptide: L-threonine 3-dehydrogenase (341 aa).

Cys-38 is a Zn(2+) binding site. Residues Thr-40 and His-43 each act as charge relay system in the active site. Zn(2+) contacts are provided by His-63, Glu-64, Cys-93, Cys-96, Cys-99, and Cys-107. Residues Ile-175, Asp-195, Arg-200, 262–264 (LGI), and 286–287 (IY) each bind NAD(+).

This sequence belongs to the zinc-containing alcohol dehydrogenase family. Homotetramer. Zn(2+) is required as a cofactor.

It localises to the cytoplasm. It carries out the reaction L-threonine + NAD(+) = (2S)-2-amino-3-oxobutanoate + NADH + H(+). Its pathway is amino-acid degradation; L-threonine degradation via oxydo-reductase pathway; glycine from L-threonine: step 1/2. Its function is as follows. Catalyzes the NAD(+)-dependent oxidation of L-threonine to 2-amino-3-ketobutyrate. The sequence is that of L-threonine 3-dehydrogenase from Escherichia coli O127:H6 (strain E2348/69 / EPEC).